The chain runs to 134 residues: Ribonuclease P protein component (134 aa).

Belongs to the RnpA family. In terms of assembly, consists of a catalytic RNA component (M1 or rnpB) and a protein subunit.

It catalyses the reaction Endonucleolytic cleavage of RNA, removing 5'-extranucleotides from tRNA precursor.. RNaseP catalyzes the removal of the 5'-leader sequence from pre-tRNA to produce the mature 5'-terminus. It can also cleave other RNA substrates such as 4.5S RNA. The protein component plays an auxiliary but essential role in vivo by binding to the 5'-leader sequence and broadening the substrate specificity of the ribozyme. This Pseudomonas putida (strain ATCC 700007 / DSM 6899 / JCM 31910 / BCRC 17059 / LMG 24140 / F1) protein is Ribonuclease P protein component.